The following is a 515-amino-acid chain: Bifunctional purine biosynthesis protein PurH (515 aa).

The MGS-like domain occupies 1-145 (MTKRALISVS…KNHASVTVVV (145 aa)).

Belongs to the PurH family.

The catalysed reaction is (6R)-10-formyltetrahydrofolate + 5-amino-1-(5-phospho-beta-D-ribosyl)imidazole-4-carboxamide = 5-formamido-1-(5-phospho-D-ribosyl)imidazole-4-carboxamide + (6S)-5,6,7,8-tetrahydrofolate. It catalyses the reaction IMP + H2O = 5-formamido-1-(5-phospho-D-ribosyl)imidazole-4-carboxamide. The protein operates within purine metabolism; IMP biosynthesis via de novo pathway; 5-formamido-1-(5-phospho-D-ribosyl)imidazole-4-carboxamide from 5-amino-1-(5-phospho-D-ribosyl)imidazole-4-carboxamide (10-formyl THF route): step 1/1. Its pathway is purine metabolism; IMP biosynthesis via de novo pathway; IMP from 5-formamido-1-(5-phospho-D-ribosyl)imidazole-4-carboxamide: step 1/1. The sequence is that of Bifunctional purine biosynthesis protein PurH from Streptococcus mutans serotype c (strain ATCC 700610 / UA159).